The chain runs to 117 residues: Small ribosomal subunit protein bS6 (117 aa).

This sequence belongs to the bacterial ribosomal protein bS6 family.

Functionally, binds together with bS18 to 16S ribosomal RNA. This is Small ribosomal subunit protein bS6 from Roseobacter denitrificans (strain ATCC 33942 / OCh 114) (Erythrobacter sp. (strain OCh 114)).